The primary structure comprises 191 residues: Ribosome maturation factor RimM (191 aa).

Residues E102–L185 form the PRC barrel domain.

Belongs to the RimM family. In terms of assembly, binds ribosomal protein uS19.

It is found in the cytoplasm. In terms of biological role, an accessory protein needed during the final step in the assembly of 30S ribosomal subunit, possibly for assembly of the head region. Essential for efficient processing of 16S rRNA. May be needed both before and after RbfA during the maturation of 16S rRNA. It has affinity for free ribosomal 30S subunits but not for 70S ribosomes. This chain is Ribosome maturation factor RimM, found in Crocosphaera subtropica (strain ATCC 51142 / BH68) (Cyanothece sp. (strain ATCC 51142)).